The primary structure comprises 284 residues: MLSKQIPLGIYEKALPAGECWLERLQLAKTLGFDFVEMSVDETDDRLSRLDWSREQRLALVNAIVETGVRVPSMCLSAHRRFPLGSEDDAVRAQGLEIMRKAIQFAQDVGIRVIQLAGYDVYYQEANNETRRRFRDGLKESVEMASRAQVTLAMEIMDYPLMNSISKALGYAHYFNNPWFQLYPDIGNLSAWDNDVQMELQAGIGHIVAVHVKDTKPGVFKNVPFGEGVVDFERCFETLKQSGYCGPYLIEMWSETAEDPAAEVAKARDWVKARMAKAGMVEAA.

It belongs to the L-ribulose-5-phosphate 3-epimerase family.

It carries out the reaction L-ribulose 5-phosphate = L-xylulose 5-phosphate. It functions in the pathway cofactor degradation; L-ascorbate degradation; D-xylulose 5-phosphate from L-ascorbate: step 3/4. In terms of biological role, catalyzes the isomerization of L-xylulose-5-phosphate to L-ribulose-5-phosphate. Is involved in the anaerobic L-ascorbate utilization. This chain is L-ribulose-5-phosphate 3-epimerase UlaE, found in Escherichia coli O45:K1 (strain S88 / ExPEC).